A 173-amino-acid chain; its full sequence is Nascent polypeptide-associated complex subunit alpha (173 aa).

Positions 21–85 (VVHAEKAQKL…VTVEDMAAQA (65 aa)) constitute an NAC-A/B domain. The tract at residues 89–117 (NESQKQATETKEEAAITEESGDAQPADTA) is disordered. At serine 122 the chain carries Phosphoserine. In terms of domain architecture, UBA spans 134-171 (VDAKDIELVMAQANVSRAKAVTALKENNSDVVNAIMSL).

This sequence belongs to the NAC-alpha family. In terms of assembly, part of the nascent polypeptide-associated complex (NAC), consisting of ucp15 and btf3. NAC associates with ribosomes via btf3.

Its subcellular location is the cytoplasm. It is found in the nucleus. Component of the nascent polypeptide-associated complex (NAC), a dynamic component of the ribosomal exit tunnel, protecting the emerging polypeptides from interaction with other cytoplasmic proteins to ensure appropriate nascent protein targeting. The NAC complex also promotes mitochondrial protein import by enhancing productive ribosome interactions with the outer mitochondrial membrane and blocks the inappropriate interaction of ribosomes translating non-secretory nascent polypeptides with translocation sites in the membrane of the endoplasmic reticulum. Ucp15 may also be involved in transcription regulation. The chain is Nascent polypeptide-associated complex subunit alpha (egd2) from Schizosaccharomyces pombe (strain 972 / ATCC 24843) (Fission yeast).